Here is a 347-residue protein sequence, read N- to C-terminus: MPHTHKITPQEALQRTIEHREIFHDEMLHIMRLIMSGEMSPVMMAALITGLRVKKETIGEITAAAQVMREFSTKVHVADKTHLVDIVGTGGDGSHTFNISTCSMFVAAAAGAKVSKHGGRSVSSKSGSADVMEALGININLMPEAIAKCIEEAGVGFMFAPNHHPAMKNVAPIRKELGVRTIFNILGPLTNPASAPNILMGVFHPDLVGIQIRALQRLGAEHALVVYGKDGMDEVSLGAATIVGELKNGEITEYEIHPEDFSMTMASNRALRVETPEQSKAMLLGVLDNQPGAARDIVILNAGAALYAANVASSMQEGIVKARAALESGAAKARLAQLVSITQTLAA.

5-phospho-alpha-D-ribose 1-diphosphate-binding positions include glycine 88, 91–92 (GD), threonine 96, 98–101 (NIST), 116–124 (KHGGRSVSS), and serine 128. Anthranilate is bound at residue glycine 88. Serine 100 contributes to the Mg(2+) binding site. Position 174 (arginine 174) interacts with anthranilate. Mg(2+) is bound by residues aspartate 233 and glutamate 234.

The protein belongs to the anthranilate phosphoribosyltransferase family. In terms of assembly, homodimer. Mg(2+) is required as a cofactor.

The enzyme catalyses N-(5-phospho-beta-D-ribosyl)anthranilate + diphosphate = 5-phospho-alpha-D-ribose 1-diphosphate + anthranilate. Its pathway is amino-acid biosynthesis; L-tryptophan biosynthesis; L-tryptophan from chorismate: step 2/5. In terms of biological role, catalyzes the transfer of the phosphoribosyl group of 5-phosphorylribose-1-pyrophosphate (PRPP) to anthranilate to yield N-(5'-phosphoribosyl)-anthranilate (PRA). In Polaromonas sp. (strain JS666 / ATCC BAA-500), this protein is Anthranilate phosphoribosyltransferase.